Consider the following 769-residue polypeptide: Serine protease HtrA-like (769 aa).

Positions 1–20 (MDIGKKHVIPKSQYRRKRRE) are enriched in basic residues. The disordered stretch occupies residues 1–388 (MDIGKKHVIP…KKATSKLNKG (388 aa)). Basic and acidic residues-rich tracts occupy residues 21–64 (FFHN…ERFK), 71–87 (LEQRNRDVNENKAEESK), and 96–108 (YNKDHYLTDDVSK). Over residues 126–139 (YEQNTEATLSTNST) the composition is skewed to polar residues. Basic and acidic residues predominate over residues 140 to 186 (DKVESTDMRKLSSDKNKVGHEEQHVLSKPSEHDKETRIDFESSRTDS). The span at 247–262 (QQSQNEQTKTYTYGDS) shows a compositional bias: polar residues. Basic and acidic residues-rich tracts occupy residues 264-296 (QNDKSNHENDLSHHTPSISDDKDYVMREDHIVD) and 310-330 (KIDDDRKLDEKIHVEDKHKQN). Residues 331 to 347 (ADSSETVGYQSQSSASH) are compositionally biased toward polar residues. A compositionally biased stretch (basic and acidic residues) spans 348-364 (RSTEKRNMAINDHDKLN). The span at 366-388 (QKPNTKTSANNNQKKATSKLNKG) shows a compositional bias: polar residues. A helical transmembrane segment spans residues 410-430 (LVILMGIIILIVILNAIFNNV). Residues His-504, Asp-534, and Ser-619 each act as charge relay system in the active site. Residues 680–733 (IASLNSFERQAVKLLGKVKNGVVVDQVDNNGLADQSGLKKGDVITELDGKLLED) form the PDZ domain.

This sequence belongs to the peptidase S1C family.

The protein resides in the cell membrane. The chain is Serine protease HtrA-like from Staphylococcus aureus (strain MRSA252).